The chain runs to 320 residues: Cytochrome f (320 aa).

A signal peptide spans 1–35 (MQNRNFNNLIIKWAIRLISIMIIINTIFWSSISEA). 4 residues coordinate heme: phenylalanine 36, cysteine 56, cysteine 59, and histidine 60. The helical transmembrane segment at 286 to 305 (IQGLLLFFGSVILAQIFLVL) threads the bilayer.

It belongs to the cytochrome f family. As to quaternary structure, the 4 large subunits of the cytochrome b6-f complex are cytochrome b6, subunit IV (17 kDa polypeptide, petD), cytochrome f and the Rieske protein, while the 4 small subunits are PetG, PetL, PetM and PetN. The complex functions as a dimer. Requires heme as cofactor.

The protein resides in the plastid. Its subcellular location is the chloroplast thylakoid membrane. Functionally, component of the cytochrome b6-f complex, which mediates electron transfer between photosystem II (PSII) and photosystem I (PSI), cyclic electron flow around PSI, and state transitions. The polypeptide is Cytochrome f (petA) (Marchantia polymorpha (Common liverwort)).